The following is a 345-amino-acid chain: Fructose-1,6-bisphosphatase class 1 (345 aa).

Glu-90, Asp-109, Leu-111, and Asp-112 together coordinate Mg(2+). Substrate contacts are provided by residues Asp-112–Ser-115 and Asn-200. Glu-272 provides a ligand contact to Mg(2+).

This sequence belongs to the FBPase class 1 family. Homotetramer. It depends on Mg(2+) as a cofactor.

The protein resides in the cytoplasm. The catalysed reaction is beta-D-fructose 1,6-bisphosphate + H2O = beta-D-fructose 6-phosphate + phosphate. The protein operates within carbohydrate biosynthesis; gluconeogenesis. In Bradyrhizobium diazoefficiens (strain JCM 10833 / BCRC 13528 / IAM 13628 / NBRC 14792 / USDA 110), this protein is Fructose-1,6-bisphosphatase class 1.